The sequence spans 146 residues: uncharacterized protein (146 aa).

This is an uncharacterized protein from Acidianus filamentous virus 2 (isolate Italy/Pozzuoli) (AFV-2).